A 500-amino-acid polypeptide reads, in one-letter code: Protein nucleotidyltransferase YdiU (500 aa).

ATP contacts are provided by Gly98, Gly100, Arg101, Lys124, Asp136, Gly137, Arg187, and Arg194. Asp263 (proton acceptor) is an active-site residue. Positions 264 and 273 each coordinate Mg(2+). An ATP-binding site is contributed by Asp273.

Belongs to the SELO family. It depends on Mg(2+) as a cofactor. Mn(2+) is required as a cofactor.

It carries out the reaction L-seryl-[protein] + ATP = 3-O-(5'-adenylyl)-L-seryl-[protein] + diphosphate. It catalyses the reaction L-threonyl-[protein] + ATP = 3-O-(5'-adenylyl)-L-threonyl-[protein] + diphosphate. The enzyme catalyses L-tyrosyl-[protein] + ATP = O-(5'-adenylyl)-L-tyrosyl-[protein] + diphosphate. The catalysed reaction is L-histidyl-[protein] + UTP = N(tele)-(5'-uridylyl)-L-histidyl-[protein] + diphosphate. It carries out the reaction L-seryl-[protein] + UTP = O-(5'-uridylyl)-L-seryl-[protein] + diphosphate. It catalyses the reaction L-tyrosyl-[protein] + UTP = O-(5'-uridylyl)-L-tyrosyl-[protein] + diphosphate. Functionally, nucleotidyltransferase involved in the post-translational modification of proteins. It can catalyze the addition of adenosine monophosphate (AMP) or uridine monophosphate (UMP) to a protein, resulting in modifications known as AMPylation and UMPylation. This is Protein nucleotidyltransferase YdiU from Herminiimonas arsenicoxydans.